The primary structure comprises 162 residues: NADH-quinone oxidoreductase subunit I (162 aa).

2 4Fe-4S ferredoxin-type domains span residues 52-82 (LRRY…IEAG) and 93-122 (TRYD…EGPN). Cys-62, Cys-65, Cys-68, Cys-72, Cys-102, Cys-105, Cys-108, and Cys-112 together coordinate [4Fe-4S] cluster.

This sequence belongs to the complex I 23 kDa subunit family. In terms of assembly, NDH-1 is composed of 14 different subunits. Subunits NuoA, H, J, K, L, M, N constitute the membrane sector of the complex. Requires [4Fe-4S] cluster as cofactor.

The protein localises to the cell inner membrane. The enzyme catalyses a quinone + NADH + 5 H(+)(in) = a quinol + NAD(+) + 4 H(+)(out). In terms of biological role, NDH-1 shuttles electrons from NADH, via FMN and iron-sulfur (Fe-S) centers, to quinones in the respiratory chain. The immediate electron acceptor for the enzyme in this species is believed to be ubiquinone. Couples the redox reaction to proton translocation (for every two electrons transferred, four hydrogen ions are translocated across the cytoplasmic membrane), and thus conserves the redox energy in a proton gradient. The sequence is that of NADH-quinone oxidoreductase subunit I from Methylobacterium radiotolerans (strain ATCC 27329 / DSM 1819 / JCM 2831 / NBRC 15690 / NCIMB 10815 / 0-1).